A 434-amino-acid chain; its full sequence is Forkhead box protein A2-A (434 aa).

A DNA-binding region (fork-head) is located at residues 149–243 (KPPYSYISLI…ENGCYLRRQK (95 aa)). The segment covering 249-262 (KKPSLREGGGKKLS) has biased composition (basic and acidic residues). Disordered stretches follow at residues 249–339 (KKPS…QSHL) and 408–434 (SGLE…MNSS). Composition is skewed to low complexity over residues 263-291 (EGAS…SSSP) and 317-333 (ASQA…VLSH). Positions 408–422 (SGLESSPITSDTSYY) are enriched in polar residues.

As to expression, at gastrula stage, expressed in both the anterior and posterior endoderm, with endodermal expression persisting into early tailbud stages. Expression is absent in gastrula stage ectoderm. During tailbud stages, expressed in the pharyngeal region, the neural floor plate, the midbrain, hindbrain and in cranial neural crest cells. Expressed in the foregut of hatching larvae. In tadpoles, expressed in the pharyngeal pouches and in other anterior endodermal regions. Within the tadpole nervous system, expressed in the neural floor plate, at high levels in the ventral midbrain and hindbrain, and at lower levels in the spinal cord. Expressed in the adult lung and brain.

It is found in the nucleus. Functionally, acts as a transcriptional activator during early development, limiting the extent of mesoderm formation in the gastrula. Binds to DNA via the target sequence 5'-GT[AC]AACA-3', with 5'-GTAAACA-3' being the preferred binding site. The protein is Forkhead box protein A2-A (foxa2-a) of Xenopus laevis (African clawed frog).